Reading from the N-terminus, the 864-residue chain is Leucine--tRNA ligase (864 aa).

Positions 42 to 52 match the 'HIGH' region motif; it reads PYPSGKLHMGH. Residues 624 to 628 carry the 'KMSKS' region motif; it reads KMSKS. K627 provides a ligand contact to ATP.

Belongs to the class-I aminoacyl-tRNA synthetase family.

It is found in the cytoplasm. The enzyme catalyses tRNA(Leu) + L-leucine + ATP = L-leucyl-tRNA(Leu) + AMP + diphosphate. This Burkholderia multivorans (strain ATCC 17616 / 249) protein is Leucine--tRNA ligase.